The sequence spans 202 residues: Probable septum site-determining protein MinC (202 aa).

Belongs to the MinC family. As to quaternary structure, interacts with MinD and FtsZ.

Functionally, cell division inhibitor that blocks the formation of polar Z ring septums. Rapidly oscillates between the poles of the cell to destabilize FtsZ filaments that have formed before they mature into polar Z rings. Prevents FtsZ polymerization. The chain is Probable septum site-determining protein MinC from Dictyoglomus turgidum (strain DSM 6724 / Z-1310).